The primary structure comprises 130 residues: Large ribosomal subunit protein bL17 (130 aa).

It belongs to the bacterial ribosomal protein bL17 family. Part of the 50S ribosomal subunit. Contacts protein L32.

This is Large ribosomal subunit protein bL17 from Photorhabdus laumondii subsp. laumondii (strain DSM 15139 / CIP 105565 / TT01) (Photorhabdus luminescens subsp. laumondii).